The following is a 197-amino-acid chain: Transcription factor FapR (197 aa).

It belongs to the FapR family.

Its function is as follows. Transcriptional factor involved in regulation of membrane lipid biosynthesis by repressing genes involved in fatty acid and phospholipid metabolism. The sequence is that of Transcription factor FapR from Bacillus cereus (strain 03BB102).